The sequence spans 311 residues: tRNA (guanine-N(7)-)-methyltransferase (311 aa).

The S-adenosyl-L-methionine site is built by Glu-28, Glu-53, and Asp-103. The active site involves Asp-103. Positions 107 and 139 each coordinate substrate.

This sequence belongs to the class I-like SAM-binding methyltransferase superfamily. TrmB family.

It catalyses the reaction guanosine(46) in tRNA + S-adenosyl-L-methionine = N(7)-methylguanosine(46) in tRNA + S-adenosyl-L-homocysteine. It functions in the pathway tRNA modification; N(7)-methylguanine-tRNA biosynthesis. Catalyzes the formation of N(7)-methylguanine at position 46 (m7G46) in tRNA. This is tRNA (guanine-N(7)-)-methyltransferase from Thermus thermophilus (strain ATCC BAA-163 / DSM 7039 / HB27).